Consider the following 199-residue polypeptide: MLEVLLVLLGYVLGSVPTGILVGRAYGVDVRKVGSGNIGTANVMRAAGKGAAALTMLGDMLKGVAPVLLARALGAGPWVLAAVALAAVVGHCWPVFLRFRGGKGVATGAGTSIALAPPVGLGMFALWWVVALASRYTSLAAMVVTVVSPFAFLLSGQPLPYVLYTVVGGAAVLWRHRENARALLRGTERKFGGRSGGGG.

4 helical membrane passes run 2 to 22 (LEVL…GILV), 77 to 97 (PWVL…PVFL), 113 to 133 (IALA…VALA), and 139 to 159 (LAAM…GQPL).

The protein belongs to the PlsY family. As to quaternary structure, probably interacts with PlsX.

The protein localises to the cell membrane. It carries out the reaction an acyl phosphate + sn-glycerol 3-phosphate = a 1-acyl-sn-glycero-3-phosphate + phosphate. It functions in the pathway lipid metabolism; phospholipid metabolism. Catalyzes the transfer of an acyl group from acyl-phosphate (acyl-PO(4)) to glycerol-3-phosphate (G3P) to form lysophosphatidic acid (LPA). This enzyme utilizes acyl-phosphate as fatty acyl donor, but not acyl-CoA or acyl-ACP. This is Glycerol-3-phosphate acyltransferase from Rubrobacter xylanophilus (strain DSM 9941 / JCM 11954 / NBRC 16129 / PRD-1).